The following is a 154-amino-acid chain: Iron-sulfur cluster assembly 2 homolog, mitochondrial (154 aa).

The transit peptide at 1-8 directs the protein to the mitochondrion; that stretch reads MAAARGLS. The Fe cation site is built by cysteine 79, cysteine 144, and cysteine 146.

This sequence belongs to the HesB/IscA family. In terms of assembly, heterotetramer; forms a dimer of dimers with IBA57. Interacts with [2Fe-2S]-ISCA2 forming the heterodimer [2Fe- 2S]-ISCA2-IBA57 complex; [2Fe-2S] cluster binding is absolutely required to promote the complex formation.

It is found in the mitochondrion. In terms of biological role, involved in the maturation of mitochondrial 4Fe-4S proteins functioning late in the iron-sulfur cluster assembly pathway. May be involved in the binding of an intermediate of Fe/S cluster assembly. In Pongo abelii (Sumatran orangutan), this protein is Iron-sulfur cluster assembly 2 homolog, mitochondrial (ISCA2).